Reading from the N-terminus, the 134-residue chain is Large ribosomal subunit protein eL14y (134 aa).

Belongs to the eukaryotic ribosomal protein eL14 family.

In Arabidopsis thaliana (Mouse-ear cress), this protein is Large ribosomal subunit protein eL14y (RPL14B).